Here is a 550-residue protein sequence, read N- to C-terminus: Dihydroxy-acid dehydratase (550 aa).

Asp81 provides a ligand contact to Mg(2+). Cys122 lines the [2Fe-2S] cluster pocket. Mg(2+) is bound by residues Asp123 and Lys124. An N6-carboxylysine modification is found at Lys124. Cys194 is a binding site for [2Fe-2S] cluster. Residue Glu442 participates in Mg(2+) binding. Catalysis depends on Ser467, which acts as the Proton acceptor.

The protein belongs to the IlvD/Edd family. In terms of assembly, homodimer. It depends on [2Fe-2S] cluster as a cofactor. Mg(2+) is required as a cofactor.

It carries out the reaction (2R)-2,3-dihydroxy-3-methylbutanoate = 3-methyl-2-oxobutanoate + H2O. It catalyses the reaction (2R,3R)-2,3-dihydroxy-3-methylpentanoate = (S)-3-methyl-2-oxopentanoate + H2O. Its pathway is amino-acid biosynthesis; L-isoleucine biosynthesis; L-isoleucine from 2-oxobutanoate: step 3/4. The protein operates within amino-acid biosynthesis; L-valine biosynthesis; L-valine from pyruvate: step 3/4. Its function is as follows. Functions in the biosynthesis of branched-chain amino acids. Catalyzes the dehydration of (2R,3R)-2,3-dihydroxy-3-methylpentanoate (2,3-dihydroxy-3-methylvalerate) into 2-oxo-3-methylpentanoate (2-oxo-3-methylvalerate) and of (2R)-2,3-dihydroxy-3-methylbutanoate (2,3-dihydroxyisovalerate) into 2-oxo-3-methylbutanoate (2-oxoisovalerate), the penultimate precursor to L-isoleucine and L-valine, respectively. The chain is Dihydroxy-acid dehydratase from Methanoregula boonei (strain DSM 21154 / JCM 14090 / 6A8).